Reading from the N-terminus, the 218-residue chain is NAD(P)H-quinone oxidoreductase subunit I (218 aa).

4Fe-4S ferredoxin-type domains are found at residues 55-84 (GRIHYEFDKCIACEVCVRVCPINLPVVDWV) and 95-124 (RNYSIDFGVCIFCGNCVEYCPTNCLSMTEE). [4Fe-4S] cluster contacts are provided by Cys64, Cys67, Cys70, Cys74, Cys104, Cys107, Cys110, and Cys114. Residues 168-218 (EVQPHGVDPSRPRAGQRPDQVLSSLKQNAGGSAGNEGESATSTNTSKGSAE) form a disordered region. Residues 208 to 218 (TSTNTSKGSAE) are compositionally biased toward polar residues.

The protein belongs to the complex I 23 kDa subunit family. NDH-1 is composed of at least 11 different subunits. Requires [4Fe-4S] cluster as cofactor.

The protein resides in the cellular thylakoid membrane. It catalyses the reaction a plastoquinone + NADH + (n+1) H(+)(in) = a plastoquinol + NAD(+) + n H(+)(out). The enzyme catalyses a plastoquinone + NADPH + (n+1) H(+)(in) = a plastoquinol + NADP(+) + n H(+)(out). In terms of biological role, NDH-1 shuttles electrons from an unknown electron donor, via FMN and iron-sulfur (Fe-S) centers, to quinones in the respiratory and/or the photosynthetic chain. The immediate electron acceptor for the enzyme in this species is believed to be plastoquinone. Couples the redox reaction to proton translocation, and thus conserves the redox energy in a proton gradient. This Synechococcus sp. (strain WH7803) protein is NAD(P)H-quinone oxidoreductase subunit I.